Consider the following 473-residue polypeptide: Zinc finger and SCAN domain-containing protein 21 (473 aa).

K27 participates in a covalent cross-link: Glycyl lysine isopeptide (Lys-Gly) (interchain with G-Cter in SUMO2). Residues 45–127 (RQRFRQFGYH…TLLEDLEREL (83 aa)) form the SCAN box domain. A disordered region spans residues 127–171 (LDEPGHQVSTPPNEQKPVWEKISSSGTAKESPSSMQPQPLETSHN). The segment covering 148 to 171 (ISSSGTAKESPSSMQPQPLETSHN) has biased composition (polar residues). Glycyl lysine isopeptide (Lys-Gly) (interchain with G-Cter in SUMO2) cross-links involve residues K221 and K232. The disordered stretch occupies residues 244–272 (LENEKGTKPPLQEAGSKKGRESVPTKPTP). The segment covering 258-272 (GSKKGRESVPTKPTP) has biased composition (basic and acidic residues). 7 consecutive C2H2-type zinc fingers follow at residues 277 to 299 (YICA…RRTH), 305 to 327 (YVCT…YRTH), 333 to 354 (YDCK…QRMH), 360 to 382 (YQCK…YRIH), 388 to 410 (YQCN…QRLH), 416 to 438 (YKCK…HRIH), and 444 to 466 (YWCH…QRVH). Residue K349 forms a Glycyl lysine isopeptide (Lys-Gly) (interchain with G-Cter in SUMO2) linkage.

Belongs to the krueppel C2H2-type zinc-finger protein family.

The protein resides in the nucleus. Functionally, strong transcriptional activator. Plays an important role in spermatogenesis; essential for the progression of meiotic prophase I in spermatocytes. This chain is Zinc finger and SCAN domain-containing protein 21 (ZSCAN21), found in Gorilla gorilla gorilla (Western lowland gorilla).